A 71-amino-acid chain; its full sequence is UPF0346 protein SPG_0874 (71 aa).

Belongs to the UPF0346 family.

The sequence is that of UPF0346 protein SPG_0874 from Streptococcus pneumoniae serotype 19F (strain G54).